A 365-amino-acid polypeptide reads, in one-letter code: 4-hydroxy-3-methylbut-2-en-1-yl diphosphate synthase (flavodoxin) (365 aa).

Cys265, Cys268, Cys300, and Glu307 together coordinate [4Fe-4S] cluster.

This sequence belongs to the IspG family. It depends on [4Fe-4S] cluster as a cofactor.

It carries out the reaction (2E)-4-hydroxy-3-methylbut-2-enyl diphosphate + oxidized [flavodoxin] + H2O + 2 H(+) = 2-C-methyl-D-erythritol 2,4-cyclic diphosphate + reduced [flavodoxin]. Its pathway is isoprenoid biosynthesis; isopentenyl diphosphate biosynthesis via DXP pathway; isopentenyl diphosphate from 1-deoxy-D-xylulose 5-phosphate: step 5/6. Functionally, converts 2C-methyl-D-erythritol 2,4-cyclodiphosphate (ME-2,4cPP) into 1-hydroxy-2-methyl-2-(E)-butenyl 4-diphosphate. In Bacillus mycoides (strain KBAB4) (Bacillus weihenstephanensis), this protein is 4-hydroxy-3-methylbut-2-en-1-yl diphosphate synthase (flavodoxin).